The sequence spans 146 residues: Deoxyuridine 5'-triphosphate nucleotidohydrolase (146 aa).

Substrate is bound by residues 65–67 (RSG), Asn78, and 82–84 (TID).

The protein belongs to the dUTPase family. Mg(2+) is required as a cofactor.

The catalysed reaction is dUTP + H2O = dUMP + diphosphate + H(+). It participates in pyrimidine metabolism; dUMP biosynthesis; dUMP from dCTP (dUTP route): step 2/2. Functionally, this enzyme is involved in nucleotide metabolism: it produces dUMP, the immediate precursor of thymidine nucleotides and it decreases the intracellular concentration of dUTP so that uracil cannot be incorporated into DNA. This chain is Deoxyuridine 5'-triphosphate nucleotidohydrolase, found in Treponema pallidum subsp. pallidum (strain SS14).